An 892-amino-acid chain; its full sequence is Translation initiation factor IF-2 (892 aa).

A disordered region spans residues 88–306 (KKRTFVKRDP…LQQGFQKPAQ (219 aa)). 2 stretches are compositionally biased toward basic and acidic residues: residues 93–159 (VKRD…KDKV) and 166–216 (DMIK…EENK). Residues 254-269 (GRGRNAKAARPAKKGK) are compositionally biased toward basic residues. Basic and acidic residues predominate over residues 270 to 282 (HAESKADREEARA). Positions 391-560 (PRAPVVTIMG…LLQAEVLELK (170 aa)) constitute a tr-type G domain. The G1 stretch occupies residues 400–407 (GHVDHGKT). 400-407 (GHVDHGKT) provides a ligand contact to GTP. The segment at 425 to 429 (GITQH) is G2. A G3 region spans residues 446–449 (DTPG). Residues 446–450 (DTPGH) and 500–503 (NKID) each bind GTP. A G4 region spans residues 500–503 (NKID). Residues 536–538 (SAK) form a G5 region.

Belongs to the TRAFAC class translation factor GTPase superfamily. Classic translation factor GTPase family. IF-2 subfamily.

It localises to the cytoplasm. Its function is as follows. One of the essential components for the initiation of protein synthesis. Protects formylmethionyl-tRNA from spontaneous hydrolysis and promotes its binding to the 30S ribosomal subunits. Also involved in the hydrolysis of GTP during the formation of the 70S ribosomal complex. The protein is Translation initiation factor IF-2 of Salmonella schwarzengrund (strain CVM19633).